Consider the following 1674-residue polypeptide: Kinesin-like protein KIF21A (1674 aa).

N-acetylmethionine is present on Met1. In terms of domain architecture, Kinesin motor spans 9–371; it reads SVRVAVRIRP…LKYANRARNI (363 aa). 88–95 serves as a coordination point for ATP; the sequence is GQTGAGKT. A coiled-coil region spans residues 365–575; it reads ANRARNIKNK…NREERSVAGK (211 aa). At Ser524 the chain carries Phosphoserine. Disordered regions lie at residues 556 to 641, 779 to 804, and 841 to 881; these read KKRL…DEKA, EEQE…DQRK, and SDKV…AQQK. Residues 560-597 are compositionally biased toward basic and acidic residues; it reads QKLEESNREERSVAGKEDNTDTDQEKKEEKGVSERENN. Acidic residues predominate over residues 598-637; the sequence is ELEVEESQEVSDHEDEEEEEEEEEDDIDGGESSDESDSES. Residues 851–865 show a composition bias toward polar residues; the sequence is KLSSSDAPAQDTGSS. Coiled coils occupy residues 931–1019 and 1053–1083; these read TDII…AKEE and LQAA…NQLL. Residues 1116–1138 are disordered; the sequence is VEDSTDEDAPLNSPGSEGSTLSS. Residues 1128 to 1138 are compositionally biased toward polar residues; the sequence is SPGSEGSTLSS. Residues 1146–1167 form an interaction with KANK1 and KANK2 region; it reads EVKPKNKARRRTTTQMELLYAD. Polar residues-rich tracts occupy residues 1170–1179 and 1196–1205; these read ELASDTSTGD and GMNTETSGTS. The tract at residues 1170-1318 is disordered; that stretch reads ELASDTSTGD…SSLSEVHRSS (149 aa). Phosphoserine is present on residues Ser1212, Ser1225, Ser1229, and Ser1239. The span at 1245 to 1262 shows a compositional bias: basic and acidic residues; the sequence is KAYEKAEKSKAKEQKHSD. Residues 1288–1297 show a composition bias toward polar residues; that stretch reads NRLTVSQGNT. WD repeat units lie at residues 1345–1382, 1385–1423, 1449–1487, 1490–1532, 1541–1578, 1582–1621, and 1624–1661; these read GHTK…EIMS, GHPN…KCIR, SGEN…STGK, GHLG…LGTV, PHYD…LLQQ, AHKD…PVGE, and GHDS…DGQI. Ser1662 is subject to Phosphoserine. The residue at position 1664 (Thr1664) is a Phosphothreonine. Phosphoserine is present on Ser1673.

The protein belongs to the TRAFAC class myosin-kinesin ATPase superfamily. Kinesin family. Part of a cortical microtubule stabilization complex (CMSC) composed of KANK1, PPFIA1, PPFIBP1, ERC1/ELKS, PHLDB2/LL5beta, CLASPs, KIF21A and possibly additional interactors; within CMSCs KANK1 and PHLDB2/LL5beta seem to be the core components for recruiting microtubule-binding proteins KIF21A and CLASPs, whereas PPFIA1, PPFIBP1 and ERC1/ELKS serve as scaffolds for protein clustering. Interacts (via residues 1146-1167) with KANK1 (via ankyrin repeats 1-5) and KANK2 (via ankyrin repeats 1-5).

The protein resides in the cytoplasm. It localises to the cytoskeleton. It is found in the cell cortex. Its subcellular location is the cell projection. The protein localises to the axon. The protein resides in the dendrite. It localises to the growth cone. Functionally, processive microtubule plus-end directed motor protein involved in neuronal axon guidance. Is recruited by KANK1 to cortical microtubule stabilizing complexes (CMSCs) at focal adhesions (FAs) rims where it promotes microtubule capture and stability. Controls microtubule polymerization rate at axonal growth cones and suppresses microtubule growth without inducing microtubule disassembly once it reaches the cell cortex. The chain is Kinesin-like protein KIF21A (KIF21A) from Homo sapiens (Human).